We begin with the raw amino-acid sequence, 79 residues long: uncharacterized protein (79 aa).

The next 2 membrane-spanning stretches (helical) occupy residues 18-38 and 50-70; these read IWIINLKVIIKIIISEIIVLI and GITFVKNEFIISSIFYFFFLF.

The protein resides in the host membrane. This is an uncharacterized protein from Spiroplasma virus SpV1-R8A2 B (SpV1).